A 1802-amino-acid polypeptide reads, in one-letter code: Transposon Ty4-H Gag-Pol polyprotein (1802 aa).

Residues 39 to 115 are a coiled coil; it reads RKVSIKDEQV…IQLLETNENN (77 aa). A ty4 protease region spans residues 381–501; it reads NNNLSPVQNE…KTKMVLSRKY (121 aa). Aspartate 414 (for protease activity; shared with dimeric partner) is an active-site residue. Residues 539 to 599 form an integrase-type zinc finger-like region; the sequence is AIKPTSSPGF…EPNEFWCQTC (61 aa). Positions 619-786 constitute an Integrase catalytic domain; it reads TDHEPGSSWC…LPLKAISRQP (168 aa). The Mg(2+) site is built by aspartate 630 and aspartate 695. The disordered stretch occupies residues 1223-1248; that stretch reads KRKRKRHDKNNSLTSYELERDKKRSK. Positions 1375 to 1510 constitute a Reverse transcriptase Ty1/copia-type domain; that stretch reads RNMFMKTLDI…DILGMDLVYN (136 aa). Positions 1383, 1462, 1463, 1644, 1686, and 1720 each coordinate Mg(2+). Residues 1644–1790 enclose the RNase H Ty1/copia-type domain; sequence DASVGSEYDA…KRFIQVLKNK (147 aa).

As to quaternary structure, the protease is a homodimer, whose active site consists of two apposed aspartic acid residues. Proteolytically processed into capsid protein (CA), Ty4 protease (PR), integrase (IN) and reverse transcriptase/ribonuclease H (RT) proteins. Initially, virus-like particles (VLPs) are composed of the structural unprocessed proteins Gag and Gag-Pol, and also contain the host initiator methionine tRNA (tRNA(i)-Met) which serves as a primer for minus-strand DNA synthesis, and a dimer of genomic Ty RNA. Processing of the polyproteins occurs within the particle and proceeds by an ordered pathway, called maturation. First, the protease (PR) is released by autocatalytic cleavage of the Gag-Pol polyprotein, and this cleavage is a prerequisite for subsequent processing at the remaining sites to release the mature structural and catalytic proteins. Maturation takes place prior to the RT reaction and is required to produce transposition-competent VLPs.

Its subcellular location is the cytoplasm. It is found in the nucleus. It carries out the reaction DNA(n) + a 2'-deoxyribonucleoside 5'-triphosphate = DNA(n+1) + diphosphate. It catalyses the reaction Endonucleolytic cleavage to 5'-phosphomonoester.. Functionally, capsid protein (CA) is the structural component of the virus-like particle (VLP), forming the shell that encapsulates the retrotransposons dimeric RNA genome. The aspartyl protease (PR) mediates the proteolytic cleavages of the Gag and Gag-Pol polyproteins after assembly of the VLP. In terms of biological role, reverse transcriptase/ribonuclease H (RT) is a multifunctional enzyme that catalyzes the conversion of the retro-elements RNA genome into dsDNA within the VLP. The enzyme displays a DNA polymerase activity that can copy either DNA or RNA templates, and a ribonuclease H (RNase H) activity that cleaves the RNA strand of RNA-DNA heteroduplexes during plus-strand synthesis and hydrolyzes RNA primers. The conversion leads to a linear dsDNA copy of the retrotransposon that includes long terminal repeats (LTRs) at both ends. Its function is as follows. Integrase (IN) targets the VLP to the nucleus, where a subparticle preintegration complex (PIC) containing at least integrase and the newly synthesized dsDNA copy of the retrotransposon must transit the nuclear membrane. Once in the nucleus, integrase performs the integration of the dsDNA into the host genome. The polypeptide is Transposon Ty4-H Gag-Pol polyprotein (TY4B-H) (Saccharomyces cerevisiae (strain ATCC 204508 / S288c) (Baker's yeast)).